Here is a 1648-residue protein sequence, read N- to C-terminus: Pleiotropic ABC efflux transporter of multiple drugs YBT1 (1648 aa).

Residues 28–48 form a helical membrane-spanning segment; sequence NYVPTTLVTISILILLHNFFI. Asn-72 is a glycosylation site (N-linked (GlcNAc...) asparagine). The next 4 helical transmembrane spans lie at 140–160, 175–195, 207–227, and 250–270; these read VVIE…LSIE, PHVL…LNLN, NIWL…ILPF, and LNLV…LPVL. Residue Asn-306 is glycosylated (N-linked (GlcNAc...) asparagine). Helical transmembrane passes span 352 to 372 and 392 to 412; these read FLNL…SIFV and MNLA…VAIC. The ABC transmembrane type-1 1 domain maps to 361–674; it reads CFTTISAFSI…ISDMLSYLIQ (314 aa). An N-linked (GlcNAc...) asparagine glycan is attached at Asn-471. The next 2 membrane-spanning stretches (helical) occupy residues 501 to 521 and 523 to 543; these read ISEL…LTVS and ILLY…TIII. A glycan (N-linked (GlcNAc...) asparagine) is linked at Asn-573. The next 2 membrane-spanning stretches (helical) occupy residues 612-632 and 643-662; these read VWCV…GCTF and LTTP…RDPL. Residues 706–947 form the ABC transporter 1 domain; that stretch reads LAFENVTLRW…GLLGEDENMK (242 aa). N-linked (GlcNAc...) asparagine glycosylation occurs at Asn-710. 741–748 lines the ATP pocket; the sequence is GATGSGKT. 2 N-linked (GlcNAc...) asparagine glycosylation sites follow: Asn-784 and Asn-798. A helical membrane pass occupies residues 1012–1032; that stretch reads MYGGWYTIVALASVFTAILCL. An ABC transmembrane type-1 2 domain is found at 1032–1333; the sequence is LQITQAWWIR…LVRQYSELEM (302 aa). Asn-1042 carries an N-linked (GlcNAc...) asparagine glycan. The next 3 membrane-spanning stretches (helical) occupy residues 1089-1109, 1168-1188, and 1191-1211; these read IAKF…IGSI, IQSV…ISYI, and AFFP…FFYL. Asn-1255 is a glycosylation site (N-linked (GlcNAc...) asparagine). A run of 2 helical transmembrane segments spans residues 1282 to 1302 and 1305 to 1325; these read LIGA…INNI and GLAG…LWLV. Residues 1372 to 1622 enclose the ABC transporter 2 domain; the sequence is VEVNNLSLKY…KKSIFYNMCE (251 aa). Residue Asn-1376 is glycosylated (N-linked (GlcNAc...) asparagine). Residue 1406–1413 participates in ATP binding; it reads GRTGAGKS. N-linked (GlcNAc...) asparagine glycans are attached at residues Asn-1503, Asn-1524, and Asn-1573.

Belongs to the ABC transporter superfamily. ABCC family. Conjugate transporter (TC 3.A.1.208) subfamily.

The protein localises to the membrane. Its function is as follows. Pleiotropic ABC efflux transporter that might be involved in the resistance to azoles such as fluconazole. This Candida glabrata (strain ATCC 2001 / BCRC 20586 / JCM 3761 / NBRC 0622 / NRRL Y-65 / CBS 138) (Yeast) protein is Pleiotropic ABC efflux transporter of multiple drugs YBT1.